A 33-amino-acid polypeptide reads, in one-letter code: Glutaminase-asparaginase (33 aa).

The region spanning 1 to 33 (NVVVLATGGTIAGAGTNAFASQXGPLGMVVEGK) is the Asparaginase/glutaminase domain. The active-site Acyl-ester intermediate is Thr-10.

It belongs to the asparaginase 1 family. In terms of assembly, homotetramer.

The protein localises to the periplasm. The catalysed reaction is L-glutamine + H2O = L-glutamate + NH4(+). The enzyme catalyses L-asparagine + H2O = L-aspartate + NH4(+). This chain is Glutaminase-asparaginase (ansB), found in Delftia acidovorans (Pseudomonas acidovorans).